A 341-amino-acid polypeptide reads, in one-letter code: Glucokinase (341 aa).

18 to 23 is an ATP binding site; sequence GDIGGT.

The protein belongs to the bacterial glucokinase family.

It localises to the cytoplasm. It catalyses the reaction D-glucose + ATP = D-glucose 6-phosphate + ADP + H(+). This Rhizobium johnstonii (strain DSM 114642 / LMG 32736 / 3841) (Rhizobium leguminosarum bv. viciae) protein is Glucokinase.